The primary structure comprises 106 residues: uncharacterized protein (106 aa).

The disordered stretch occupies residues 1–46 (MPQGGTPCRRARRAVRPERPTSPEGVFCVGGGAPGGPPDTTNTVSA).

This is an uncharacterized protein from Gracula (BFDV).